The chain runs to 299 residues: Probable adenylate kinase 7, mitochondrial (299 aa).

A mitochondrion-targeting transit peptide spans 1-25 (MAGVLRLAGAARSPLARALAPAARR). ATP is bound at residue 80 to 85 (GPQKHA). The segment at 100-129 (SMGTLVRQELSPASSLYKKIANSVNEGKLV) is NMP. Residues R106, 127–129 (KLV), 157–160 (GIPR), and Q164 contribute to the AMP site. ATP is bound by residues R190 and 203 to 204 (LF). The LID stretch occupies residues 193-237 (GGDICPHCGQLFDFSKTASSDRNPSLGSCTWPSQVQHAAVLGLED).

The protein belongs to the adenylate kinase family.

The protein resides in the mitochondrion. It carries out the reaction AMP + ATP = 2 ADP. In terms of biological role, catalyzes the reversible transfer of the terminal phosphate group between ATP and AMP. Plays an important role in cellular energy homeostasis and in adenine nucleotide metabolism. This Oryza sativa subsp. japonica (Rice) protein is Probable adenylate kinase 7, mitochondrial.